Reading from the N-terminus, the 877-residue chain is Inner centromere protein (877 aa).

The tract at residues H47–S142 is disordered. Positions K62–S71 are enriched in basic residues. The segment covering S98–T111 has biased composition (basic and acidic residues). Polar residues predominate over residues Q119–Q134. The tract at residues V135–P270 is interaction with CBX5. The PXVXL/I motif signature appears at P155–I159. Disordered stretches follow at residues R178–S210, L248–V459, L498–K548, A572–R695, and L707–A805. Positions K261–S271 are enriched in basic and acidic residues. Residues Q272–G283 show a composition bias toward polar residues. The span at S339–E351 shows a compositional bias: low complexity. Residues L384 to C403 show a composition bias toward polar residues. 5 stretches are compositionally biased toward basic and acidic residues: residues H500–K548, A572–I591, K598–K615, E624–R695, and L707–D742. An SAH region spans residues K503–E715. Polar residues predominate over residues A744 to P765. The tract at residues Y781–N823 is IN box.

It belongs to the INCENP family. Component of the chromosomal passenger complex (CPC) composed of at least BIRC5/survivin, CDCA8/borealin, INCENP and AURKB; in the complex binds directly to AURKB via the IN box, and forms a triple-helix bundle-based subcomplex with BIRC5 and CDCA8 via its N-terminus. The initially reported homodimerization is questioned as the SAH domain is shown to be monomeric. Interacts with CBX5.

The protein localises to the nucleus. It localises to the chromosome. It is found in the centromere. Its subcellular location is the cytoplasm. The protein resides in the cytoskeleton. The protein localises to the spindle. It localises to the midbody. It is found in the kinetochore. In terms of biological role, component of the chromosomal passenger complex (CPC), a complex that acts as a key regulator of mitosis. The CPC complex has essential functions at the centromere in ensuring correct chromosome alignment and segregation and is required for chromatin-induced microtubule stabilization and spindle assembly. Acts as a scaffold regulating CPC localization and activity. The C-terminus associates with AURKB, the N-terminus associated with BIRC5/survivin and CDCA8/borealin tethers the CPC to the inner centromere, and the microtubule binding activity within the central SAH domain directs AURKB toward substrates near microtubules. The flexibility of the SAH domain is proposed to allow AURKB to follow substrates on dynamic microtubules while ensuring CPC docking to static chromatin. Activates AURKB. This Gallus gallus (Chicken) protein is Inner centromere protein (INCENP).